A 339-amino-acid polypeptide reads, in one-letter code: Non-homologous end joining protein Ku (339 aa).

A Ku domain is found at 10-187 (ITFGLVNIPV…LPKATTGKPT (178 aa)). 2 disordered regions span residues 230 to 251 (DSGK…RQGA) and 263 to 339 (SLGQ…KHAA). Positions 267–277 (RGKEDKEDATP) are enriched in basic and acidic residues. Over residues 278–289 (ARRKAPARHAAA) the composition is skewed to basic residues. Over residues 290-310 (RKQPAAKRAATPPAKRASTAA) the composition is skewed to low complexity.

The protein belongs to the prokaryotic Ku family. In terms of assembly, homodimer. Interacts with LigD.

In terms of biological role, with LigD forms a non-homologous end joining (NHEJ) DNA repair enzyme, which repairs dsDNA breaks with reduced fidelity. Binds linear dsDNA with 5'- and 3'- overhangs but not closed circular dsDNA nor ssDNA. Recruits and stimulates the ligase activity of LigD. The sequence is that of Non-homologous end joining protein Ku from Cupriavidus necator (strain ATCC 17699 / DSM 428 / KCTC 22496 / NCIMB 10442 / H16 / Stanier 337) (Ralstonia eutropha).